We begin with the raw amino-acid sequence, 1531 residues long: Nuclear factor of activated T-cells 5 (1531 aa).

Disordered regions lie at residues 34–89 and 114–141; these read ELQL…TSSS and VSNRGVSEKQLTSNTVQQHPSTPKRHTV. Over residues 41 to 51 the composition is skewed to polar residues; it reads RETSVASMSQT. Residues 63–89 are compositionally biased toward low complexity; sequence VVAADASSAPSSSSMGGACSSFTTSSS. Phosphoserine is present on Ser-120. Lys-122 is subject to N6-acetyllysine. The segment covering 122-134 has biased composition (polar residues); it reads KQLTSNTVQQHPS. At Ser-134 the chain carries Phosphoserine. Thr-135 bears the Phosphothreonine; by CDK5 mark. Residue Ser-155 is modified to Phosphoserine. 2 disordered regions span residues 175 to 220 and 241 to 265; these read WMED…CEES and TTDNKGNSKAGNGTLENQKGTGVKK. A compositionally biased stretch (low complexity) spans 179-192; sequence SPSNFSNMSTSSYN. Residues 200–212 are compositionally biased toward basic residues; it reads KSRKRNPKQRPGV. Residues 241 to 260 are compositionally biased toward polar residues; it reads TTDNKGNSKAGNGTLENQKG. The RHD domain occupies 264–443; sequence KKSPMLCGQY…SPILCTQPAG (180 aa). A DNA-binding region spans residues 293–300; it reads RARYLTEG. Residue Lys-556 forms a Glycyl lysine isopeptide (Lys-Gly) (interchain with G-Cter in SUMO1); alternate linkage. Lys-556 participates in a covalent cross-link: Glycyl lysine isopeptide (Lys-Gly) (interchain with G-Cter in SUMO2); alternate. At Ser-561 the chain carries Phosphoserine. Glycyl lysine isopeptide (Lys-Gly) (interchain with G-Cter in SUMO2) cross-links involve residues Lys-573 and Lys-603. 6 disordered regions span residues 640–666, 841–891, 958–996, 1211–1304, 1316–1371, and 1473–1502; these read NIAGNGSFSSPSSSHLPSENEKQQQIQ, VSPG…QVME, PPAVSGNETSTTTTQQVATPGTTMFQTSSSGDGEETGTQ, PQVA…QEQQ, APMN…QEQQ, and ISQPGQPQNEGQPPVTTLLSQQMPENSPLA. A compositionally biased stretch (low complexity) spans 646 to 656; that stretch reads SFSSPSSSHLP. Composition is skewed to polar residues over residues 841–852 and 869–878; these read VSPGMFSSTEPT and HPQSENTLSN. 2 stretches are compositionally biased toward low complexity: residues 879-888 and 960-980; these read QQQQQQQQQQ and AVSGNETSTTTTQQVATPGTT. Polar residues-rich tracts occupy residues 981–996 and 1224–1247; these read MFQTSSSGDGEETGTQ and PQSQQGTMFQSQHSIVAMQSNSPS. Residues 1248–1266 are compositionally biased toward low complexity; that stretch reads QEQQQQQQQQQQQQQQQQQ. Composition is skewed to polar residues over residues 1267 to 1278 and 1291 to 1304; these read SILFSNQNTMAT and FNPNQNPMANQEQQ. Residues 1320 to 1330 are compositionally biased toward low complexity; that stretch reads QEQQPMQFQSQ. The span at 1331-1371 shows a compositional bias: polar residues; that stretch reads STVSSLQNPGPTQSESSQTPLFHSSPQIQLVQGSPSSQEQQ. The span at 1475 to 1486 shows a compositional bias: low complexity; the sequence is QPGQPQNEGQPP. The span at 1487 to 1502 shows a compositional bias: polar residues; the sequence is VTTLLSQQMPENSPLA.

Homodimer when bound to DNA, completely encircles its DNA target. Interacts with CIDEC; this interaction is direct and retains NFAT5 in the cytoplasm. Does not bind with Fos and Jun transcription factors. Interacts with DDX5 and DDX17; this interaction leads to DDX5/DDX17 recruitment to LNC2 and S100A4 promoters and NFAT5-mediated DDX5/DDX17-enhanced transactivation. Post-translationally, phosphorylated. Phosphorylated at Thr-135 by CDK5 in response to osmotic stress; this phosphorylation mediates its rapid nuclear localization. Poly-ADP-ribosylated by PARP1 in response to DNA damage, promoting recruitment to sites of R-loop-associated DNA damage. Widely expressed, with highest levels in skeletal muscle, brain, heart and peripheral blood leukocytes.

Its subcellular location is the nucleus. The protein localises to the cytoplasm. It is found in the chromosome. Transcription factor involved, among others, in the transcriptional regulation of osmoprotective and inflammatory genes. Binds the DNA consensus sequence 5'-[ACT][AG]TGGAAA[CAT]A[TA][ATC][CA][ATG][GT][GAC][CG][CT]-3'. Mediates the transcriptional response to hypertonicity. Positively regulates the transcription of LCN2 and S100A4 genes; optimal transactivation of these genes requires the presence of DDX5/DDX17. Also involved in the DNA damage response by preventing formation of R-loops; R-loops are composed of a DNA:RNA hybrid and the associated non-template single-stranded DNA. The protein is Nuclear factor of activated T-cells 5 of Homo sapiens (Human).